A 631-amino-acid chain; its full sequence is Origin recognition complex subunit 1 (631 aa).

Composition is skewed to low complexity over residues 1-14 and 22-37; these read MTDESSSSISYPPI and KLNNNTNNNNKNNNNH. The tract at residues 1–164 is disordered; sequence MTDESSSSIS…EEEDEEGKFN (164 aa). Residues 55–80 are compositionally biased toward basic and acidic residues; sequence DNEKIGFSDPENEKINKHKASFKDSN. Residues 91–104 show a composition bias toward acidic residues; it reads EDTDDDDYEDEDED. The segment covering 105 to 133 has biased composition (basic and acidic residues); it reads ENHKIKDESDNSEDFNNHTKNTTDLDEGF. Residues 141 to 160 are compositionally biased toward acidic residues; it reads ESEEEEEEEEYEEEEEEDEE. Residues valine 230 and 265–273 contribute to the ATP site; that span reads GMPGTGKTA. Residues aspartate 361 and glutamate 362 each coordinate Mg(2+). Glutamate 362, asparagine 395, and arginine 460 together coordinate ATP.

Belongs to the ORC1 family. ORC is composed of six subunits.

It localises to the nucleus. Functionally, component of the origin recognition complex (ORC) that binds origins of replication. DNA-binding is ATP-dependent, however specific DNA sequences that define origins of replication have not been identified so far. ORC is required to assemble the pre-replication complex necessary to initiate DNA replication. This chain is Origin recognition complex subunit 1 (orcA), found in Dictyostelium discoideum (Social amoeba).